The primary structure comprises 149 residues: NADH-ubiquinone oxidoreductase chain 6 (149 aa).

4 helical membrane-spanning segments follow: residues 23–43, 51–71, 83–103, and 114–134; these read ILMLSSLILLTLFLSLIFYFI, MMMILIILGGMLIIFMYMISL, LSVTFTMMLILIPYDSFMTKL, and VNFVNMIILMMIFLIVMLTII.

The protein belongs to the complex I subunit 6 family.

The protein localises to the mitochondrion membrane. The catalysed reaction is a ubiquinone + NADH + 5 H(+)(in) = a ubiquinol + NAD(+) + 4 H(+)(out). In terms of biological role, core subunit of the mitochondrial membrane respiratory chain NADH dehydrogenase (Complex I) that is believed to belong to the minimal assembly required for catalysis. Complex I functions in the transfer of electrons from NADH to the respiratory chain. The immediate electron acceptor for the enzyme is believed to be ubiquinone. The sequence is that of NADH-ubiquinone oxidoreductase chain 6 (ND6) from Rhipicephalus sanguineus (Brown dog tick).